Reading from the N-terminus, the 123-residue chain is Small ribosomal subunit protein uS12 (123 aa).

D89 bears the 3-methylthioaspartic acid mark.

It belongs to the universal ribosomal protein uS12 family. As to quaternary structure, part of the 30S ribosomal subunit. Contacts proteins S8 and S17. May interact with IF1 in the 30S initiation complex.

In terms of biological role, with S4 and S5 plays an important role in translational accuracy. Its function is as follows. Interacts with and stabilizes bases of the 16S rRNA that are involved in tRNA selection in the A site and with the mRNA backbone. Located at the interface of the 30S and 50S subunits, it traverses the body of the 30S subunit contacting proteins on the other side and probably holding the rRNA structure together. The combined cluster of proteins S8, S12 and S17 appears to hold together the shoulder and platform of the 30S subunit. In Orientia tsutsugamushi (strain Ikeda) (Rickettsia tsutsugamushi), this protein is Small ribosomal subunit protein uS12.